A 509-amino-acid chain; its full sequence is Methylmalonyl-CoA decarboxylase subunit alpha (509 aa).

Positions V4–D260 constitute a CoA carboxyltransferase N-terminal domain. The CoA carboxyltransferase C-terminal domain maps to R267 to K503.

The protein belongs to the AccD/PCCB family. The methylmalonyl-CoA decarboxylase is composed of five subunits: the carboxyltransferase alpha subunit (MmdA), the tunnel beta subunit (MmdB), the biotin-containing gamma subunit (MmdC), and the delta (MmdD) and epsilon (MmdE) subunits. Interacts with the gamma subunit.

The protein localises to the cell membrane. The catalysed reaction is (S)-methylmalonyl-CoA + Na(+)(in) + H(+)(out) = propanoyl-CoA + Na(+)(out) + CO2. With respect to regulation, completely inhibited by avidin. Its function is as follows. Carboxyltransferase subunit of the sodium ion pump methylmalonyl-CoA decarboxylase, which converts the chemical energy of a decarboxylation reaction into an electrochemical gradient of Na(+) ions across the cytoplasmic membrane, thereby creating a sodium ion motive force that is used for ATP synthesis. The alpha subunit catalyzes the Na(+)-independent carboxyltransfer from methylmalonyl-CoA to the prosthetic biotin group located on the gamma subunit. Can also convert malonyl-CoA into acetyl-CoA. The chain is Methylmalonyl-CoA decarboxylase subunit alpha from Veillonella parvula (Staphylococcus parvulus).